The chain runs to 92 residues: Phosphoribosyl-ATP pyrophosphatase (92 aa).

This sequence belongs to the PRA-PH family.

The protein localises to the cytoplasm. It carries out the reaction 1-(5-phospho-beta-D-ribosyl)-ATP + H2O = 1-(5-phospho-beta-D-ribosyl)-5'-AMP + diphosphate + H(+). It functions in the pathway amino-acid biosynthesis; L-histidine biosynthesis; L-histidine from 5-phospho-alpha-D-ribose 1-diphosphate: step 2/9. This is Phosphoribosyl-ATP pyrophosphatase from Leptospira biflexa serovar Patoc (strain Patoc 1 / ATCC 23582 / Paris).